Consider the following 380-residue polypeptide: Queuine tRNA-ribosyltransferase (380 aa).

Asp-89 acts as the Proton acceptor in catalysis. Substrate contacts are provided by residues Asp-89–Phe-93, Asp-143, Gln-187, and Gly-214. The RNA binding stretch occupies residues Gly-245–Asp-251. Asp-264 functions as the Nucleophile in the catalytic mechanism. The interval Thr-269 to Arg-273 is RNA binding; important for wobble base 34 recognition. 4 residues coordinate Zn(2+): Cys-302, Cys-304, Cys-307, and His-333.

This sequence belongs to the queuine tRNA-ribosyltransferase family. Homodimer. Within each dimer, one monomer is responsible for RNA recognition and catalysis, while the other monomer binds to the replacement base PreQ1. It depends on Zn(2+) as a cofactor.

It catalyses the reaction 7-aminomethyl-7-carbaguanine + guanosine(34) in tRNA = 7-aminomethyl-7-carbaguanosine(34) in tRNA + guanine. Its pathway is tRNA modification; tRNA-queuosine biosynthesis. Catalyzes the base-exchange of a guanine (G) residue with the queuine precursor 7-aminomethyl-7-deazaguanine (PreQ1) at position 34 (anticodon wobble position) in tRNAs with GU(N) anticodons (tRNA-Asp, -Asn, -His and -Tyr). Catalysis occurs through a double-displacement mechanism. The nucleophile active site attacks the C1' of nucleotide 34 to detach the guanine base from the RNA, forming a covalent enzyme-RNA intermediate. The proton acceptor active site deprotonates the incoming PreQ1, allowing a nucleophilic attack on the C1' of the ribose to form the product. After dissociation, two additional enzymatic reactions on the tRNA convert PreQ1 to queuine (Q), resulting in the hypermodified nucleoside queuosine (7-(((4,5-cis-dihydroxy-2-cyclopenten-1-yl)amino)methyl)-7-deazaguanosine). This is Queuine tRNA-ribosyltransferase from Proteus mirabilis (strain HI4320).